A 101-amino-acid chain; its full sequence is uncharacterized protein (101 aa).

2 consecutive transmembrane segments (helical) span residues 52-72 (VVFI…VKLL) and 75-95 (LWRL…SLLG).

It is found in the endoplasmic reticulum membrane. This is an uncharacterized protein from Schizosaccharomyces pombe (strain 972 / ATCC 24843) (Fission yeast).